A 202-amino-acid polypeptide reads, in one-letter code: MPKPTKGPRLGGSSSHQKALLANLATSLFEHGRIKTTEPKARALRPYAEKLITHAKKGTLHNRREVMKKIRDKDVVHVLFAEIGPFFADRSGGYTRIIKVENRKGDNAPMAVIELVREKTVTSEANRARRADAAQKAASAGAQEVTAAAAPQAAVEPEAVETEASAETAEAEVETAEVEAVDEASAEEADEATEVEKADDDK.

Residues 132 to 202 (DAAQKAASAG…TEVEKADDDK (71 aa)) are disordered. A compositionally biased stretch (low complexity) spans 134–168 (AQKAASAGAQEVTAAAAPQAAVEPEAVETEASAET). The span at 169–193 (AEAEVETAEVEAVDEASAEEADEAT) shows a compositional bias: acidic residues.

It belongs to the bacterial ribosomal protein bL17 family. As to quaternary structure, part of the 50S ribosomal subunit. Contacts protein L32.

This Mycolicibacterium vanbaalenii (strain DSM 7251 / JCM 13017 / BCRC 16820 / KCTC 9966 / NRRL B-24157 / PYR-1) (Mycobacterium vanbaalenii) protein is Large ribosomal subunit protein bL17.